The chain runs to 133 residues: ATP synthase epsilon chain (133 aa).

This sequence belongs to the ATPase epsilon chain family. In terms of assembly, F-type ATPases have 2 components, CF(1) - the catalytic core - and CF(0) - the membrane proton channel. CF(1) has five subunits: alpha(3), beta(3), gamma(1), delta(1), epsilon(1). CF(0) has three main subunits: a, b and c.

Its subcellular location is the cell membrane. In terms of biological role, produces ATP from ADP in the presence of a proton gradient across the membrane. This Bacillus anthracis (strain A0248) protein is ATP synthase epsilon chain.